We begin with the raw amino-acid sequence, 255 residues long: Glutamate racemase (255 aa).

Substrate contacts are provided by residues 7–8 (DS) and 39–40 (YG). Cys70 functions as the Proton donor/acceptor in the catalytic mechanism. 71 to 72 (NT) serves as a coordination point for substrate. Residue Cys181 is the Proton donor/acceptor of the active site. 182-183 (TH) contributes to the substrate binding site.

It belongs to the aspartate/glutamate racemases family.

The catalysed reaction is L-glutamate = D-glutamate. The protein operates within cell wall biogenesis; peptidoglycan biosynthesis. Provides the (R)-glutamate required for cell wall biosynthesis. This is Glutamate racemase from Helicobacter pylori (strain HPAG1).